The primary structure comprises 277 residues: Inositol monophosphatase 1 (277 aa).

Glutamate 70, aspartate 90, isoleucine 92, and aspartate 93 together coordinate Mg(2+). Glutamate 70 serves as a coordination point for substrate. 92–95 lines the substrate pocket; it reads IDGT. Residue threonine 168 is modified to Phosphothreonine. Residues 194 to 196, glutamate 213, and aspartate 220 contribute to the substrate site; that span reads GTA. Aspartate 220 contacts Mg(2+).

This sequence belongs to the inositol monophosphatase superfamily. Homodimer. The cofactor is Mg(2+).

The protein resides in the cytoplasm. It catalyses the reaction a myo-inositol phosphate + H2O = myo-inositol + phosphate. The catalysed reaction is 1D-myo-inositol 1-phosphate + H2O = myo-inositol + phosphate. It carries out the reaction 1D-myo-inositol 2-phosphate + H2O = myo-inositol + phosphate. The enzyme catalyses 1D-myo-inositol 3-phosphate + H2O = myo-inositol + phosphate. It catalyses the reaction 1D-myo-inositol 4-phosphate + H2O = myo-inositol + phosphate. The catalysed reaction is 1D-myo-inositol 5-phosphate + H2O = myo-inositol + phosphate. It carries out the reaction 1D-myo-inositol 6-phosphate + H2O = myo-inositol + phosphate. The enzyme catalyses scyllo-inositol 1-phosphate + H2O = scyllo-inositol + phosphate. It catalyses the reaction alpha-D-galactose 1-phosphate + H2O = D-galactose + phosphate. The catalysed reaction is alpha-D-glucose 1-phosphate + H2O = D-glucose + phosphate. It carries out the reaction D-glucose 6-phosphate + H2O = D-glucose + phosphate. The enzyme catalyses beta-D-fructose 1-phosphate + H2O = D-fructose + phosphate. It catalyses the reaction glycerol 2-phosphate + H2O = glycerol + phosphate. The catalysed reaction is adenosine 2'-phosphate + H2O = adenosine + phosphate. It functions in the pathway polyol metabolism; myo-inositol biosynthesis; myo-inositol from D-glucose 6-phosphate: step 2/2. Its activity is regulated as follows. Inhibited by Li(+), Ca(2+) and Mn(2+), but also by Mg(2+) at concentrations above 3 mM. In terms of biological role, phosphatase involved in the dephosphorylation of myo-inositol monophosphate to generate myo-inositol. Is also able to dephosphorylate scyllo-inositol-phosphate, myo-inositol 1,4-diphosphate, scyllo-inositol-1,3-diphosphate and scyllo-inositol-1,4-diphosphate. Also dephosphorylates in vitro other sugar-phosphates including D-galactose-1-phosphate, glucose-1-phosphate, glucose-6-phosphate, fructose-1-phosphate, beta-glycerophosphate and 2'-AMP. Responsible for the provision of inositol required for synthesis of phosphatidylinositol and polyphosphoinositides, and involved in maintaining normal brain function. Has been implicated as the pharmacological target for lithium Li(+) action in brain. The sequence is that of Inositol monophosphatase 1 (IMPA1) from Sus scrofa (Pig).